Here is a 340-residue protein sequence, read N- to C-terminus: Tetraacyldisaccharide 4'-kinase (340 aa).

51–58 (HMGGAGKT) provides a ligand contact to ATP.

It belongs to the LpxK family.

It catalyses the reaction a lipid A disaccharide + ATP = a lipid IVA + ADP + H(+). Its pathway is glycolipid biosynthesis; lipid IV(A) biosynthesis; lipid IV(A) from (3R)-3-hydroxytetradecanoyl-[acyl-carrier-protein] and UDP-N-acetyl-alpha-D-glucosamine: step 6/6. Transfers the gamma-phosphate of ATP to the 4'-position of a tetraacyldisaccharide 1-phosphate intermediate (termed DS-1-P) to form tetraacyldisaccharide 1,4'-bis-phosphate (lipid IVA). The chain is Tetraacyldisaccharide 4'-kinase from Rhodopseudomonas palustris (strain TIE-1).